The chain runs to 171 residues: Putative lipoprotein LppO (171 aa).

A signal peptide spans Met1–Ala28. Cys29 carries N-palmitoyl cysteine lipidation. The S-diacylglycerol cysteine moiety is linked to residue Cys29.

Its subcellular location is the cell membrane. The sequence is that of Putative lipoprotein LppO (lppO) from Mycobacterium tuberculosis (strain CDC 1551 / Oshkosh).